We begin with the raw amino-acid sequence, 632 residues long: Phosphoglucomutase, chloroplastic (632 aa).

Residues 1 to 72 (MAMESALTST…PSSPSTSVAQ (72 aa)) constitute a chloroplast transit peptide. Alpha-D-glucose 1,6-bisphosphate contacts are provided by R97 and S190. S190 serves as the catalytic Phosphoserine intermediate. Residues S190, D355, D357, and D359 each coordinate Mg(2+). S190 is subject to Phosphoserine. Residues D359, R360, T423, E442, S444, and K455 each coordinate alpha-D-glucose 1,6-bisphosphate.

It belongs to the phosphohexose mutase family. Monomer. Mg(2+) serves as cofactor.

The protein resides in the plastid. Its subcellular location is the chloroplast. It catalyses the reaction alpha-D-glucose 1-phosphate = alpha-D-glucose 6-phosphate. The catalysed reaction is O-phospho-L-seryl-[protein] + alpha-D-glucose 1-phosphate = alpha-D-glucose 1,6-bisphosphate + L-seryl-[protein]. The enzyme catalyses alpha-D-glucose 1,6-bisphosphate + L-seryl-[protein] = O-phospho-L-seryl-[protein] + alpha-D-glucose 6-phosphate. With respect to regulation, inhibited by the Calvin cycle intermediates fructose-1,6-bisphosphate and ribulose-1,5-bisphosphate. Functionally, catalyzes the reversible isomerization of alpha-D-glucose 1-phosphate to alpha-D-glucose 6-phosphate. The mechanism proceeds via the intermediate compound alpha-D-glucose 1,6-bisphosphate. This enzyme participates in both the breakdown and synthesis of glucose. Promotes gravitropic responses, negative in shoots but positive in roots, by facilitating starch granules (statoliths) formation. This chain is Phosphoglucomutase, chloroplastic (PGMP), found in Solanum tuberosum (Potato).